We begin with the raw amino-acid sequence, 303 residues long: Putative monooxygenase p33MONOX (303 aa).

Disordered regions lie at residues 1–20 (MASR…LGKM), 37–56 (LEDP…IPWK), 66–96 (HLDK…KAPV), 156–233 (KLQS…LQKS), and 260–283 (RVGE…GKKQ). Thr-44 is modified (phosphothreonine). Positions 67-77 (LDKTEEGAASV) match the Flavin-containing monooxygenase motif motif. Residues 76–89 (SVSSLAVTPSPATD) show a composition bias toward polar residues. The span at 170 to 183 (ASAQSTPSSTPHAS) shows a compositional bias: low complexity. A Phosphothreonine modification is found at Thr-175. Ser-183 is subject to Phosphoserine.

Belongs to the P33MONOX family. In terms of assembly, interacts with NELFB, NOL12 and PRNP. In terms of tissue distribution, expressed in neuronal pyramidal cells of the hippocampus and in the neurons of the cortex.

It localises to the cytoplasm. Functionally, potential NADPH-dependent oxidoreductase. May be involved in the regulation of neuronal survival, differentiation and axonal outgrowth. The polypeptide is Putative monooxygenase p33MONOX (P33monox) (Mus musculus (Mouse)).